The chain runs to 344 residues: Methionine import ATP-binding protein MetN 1 (344 aa).

Residues 2–241 (IEIRNLSQRF…PHHEVTRALI (240 aa)) enclose the ABC transporter domain. ATP is bound at residue 38 to 45 (GRSGAGKS).

Belongs to the ABC transporter superfamily. Methionine importer (TC 3.A.1.24) family. In terms of assembly, the complex is composed of two ATP-binding proteins (MetN), two transmembrane proteins (MetI) and a solute-binding protein (MetQ).

The protein resides in the cell inner membrane. It carries out the reaction L-methionine(out) + ATP + H2O = L-methionine(in) + ADP + phosphate + H(+). It catalyses the reaction D-methionine(out) + ATP + H2O = D-methionine(in) + ADP + phosphate + H(+). Part of the ABC transporter complex MetNIQ involved in methionine import. Responsible for energy coupling to the transport system. This chain is Methionine import ATP-binding protein MetN 1, found in Burkholderia mallei (strain ATCC 23344).